The chain runs to 476 residues: Bifunctional protein HldE (476 aa).

Positions 1 to 318 are ribokinase; sequence MLSKKPNILV…EYESSLHKSN (318 aa). 195–198 contacts ATP; that stretch reads NKKE. Aspartate 263 is an active-site residue. The interval 345–476 is cytidylyltransferase; the sequence is FTNGCFDILH…RIQENEKCNN (132 aa).

The protein in the N-terminal section; belongs to the carbohydrate kinase PfkB family. It in the C-terminal section; belongs to the cytidylyltransferase family. In terms of assembly, homodimer.

It carries out the reaction D-glycero-beta-D-manno-heptose 7-phosphate + ATP = D-glycero-beta-D-manno-heptose 1,7-bisphosphate + ADP + H(+). The catalysed reaction is D-glycero-beta-D-manno-heptose 1-phosphate + ATP + H(+) = ADP-D-glycero-beta-D-manno-heptose + diphosphate. It participates in nucleotide-sugar biosynthesis; ADP-L-glycero-beta-D-manno-heptose biosynthesis; ADP-L-glycero-beta-D-manno-heptose from D-glycero-beta-D-manno-heptose 7-phosphate: step 1/4. It functions in the pathway nucleotide-sugar biosynthesis; ADP-L-glycero-beta-D-manno-heptose biosynthesis; ADP-L-glycero-beta-D-manno-heptose from D-glycero-beta-D-manno-heptose 7-phosphate: step 3/4. Catalyzes the phosphorylation of D-glycero-D-manno-heptose 7-phosphate at the C-1 position to selectively form D-glycero-beta-D-manno-heptose-1,7-bisphosphate. Its function is as follows. Catalyzes the ADP transfer from ATP to D-glycero-beta-D-manno-heptose 1-phosphate, yielding ADP-D-glycero-beta-D-manno-heptose. This Aliarcobacter butzleri (strain RM4018) (Arcobacter butzleri) protein is Bifunctional protein HldE.